A 304-amino-acid polypeptide reads, in one-letter code: Cell division protein ZipA (304 aa).

Residues Met1 to Arg5 are Periplasmic-facing. A helical membrane pass occupies residues Leu6–Thr26. The Cytoplasmic segment spans residues Ser27–His304. The segment at Arg31–Lys165 is disordered. Basic and acidic residues predominate over residues Ala121–Glu132. Low complexity predominate over residues Ala137–Pro158.

Belongs to the ZipA family. As to quaternary structure, interacts with FtsZ via their C-terminal domains.

It localises to the cell inner membrane. Essential cell division protein that stabilizes the FtsZ protofilaments by cross-linking them and that serves as a cytoplasmic membrane anchor for the Z ring. Also required for the recruitment to the septal ring of downstream cell division proteins. This is Cell division protein ZipA from Erwinia tasmaniensis (strain DSM 17950 / CFBP 7177 / CIP 109463 / NCPPB 4357 / Et1/99).